The following is a 266-amino-acid chain: MLRFLVFATLVLYGHSTQDFPETNARVVGGTEAGRNSWPSQISLQYLSGGSWYHTCGGTLIRQNWVMTAAHCVDSPKTFRVVVGDHNLSQNDGTEQYVSVQKIVVHPYWNSNNVAAGYDIALLRLAQSVTLNSYVQLGVLPQEGAILANDSPCYITGWGRTKTNGQLAQTLQQAYLPSVDYAICSSSSYWGSTVKNTMVCAGGDGVHSGCQGDSGGPLHCLVNGKYSVHGVTSFVSKQGCNVSRKPTVFTRVSAYISWINKTIASN.

Positions 1-16 are cleaved as a signal peptide; it reads MLRFLVFATLVLYGHS. The propeptide at 17 to 26 is activation peptide; that stretch reads TQDFPETNAR. The 238-residue stretch at 27-264 folds into the Peptidase S1 domain; that stretch reads VVGGTEAGRN…YISWINKTIA (238 aa). Cysteines 56 and 72 form a disulfide. The active-site Charge relay system is the histidine 71. 4 residues coordinate Ca(2+): aspartate 85, asparagine 87, glutamine 90, and glutamate 95. A glycan (N-linked (GlcNAc...) asparagine) is linked at asparagine 87. Aspartate 119 serves as the catalytic Charge relay system. Disulfide bonds link cysteine 153–cysteine 220, cysteine 184–cysteine 200, and cysteine 210–cysteine 240. The active-site Charge relay system is serine 214. 2 N-linked (GlcNAc...) asparagine glycosylation sites follow: asparagine 241 and asparagine 260.

Belongs to the peptidase S1 family. Elastase subfamily. Requires Ca(2+) as cofactor.

Its subcellular location is the secreted. It carries out the reaction Hydrolysis of proteins, including elastin. Preferential cleavage: Ala-|-Xaa.. Serine proteases that hydrolyze many proteins in addition to elastin. The sequence is that of Chymotrypsin-like elastase family member 1 (CELA1) from Macaca fascicularis (Crab-eating macaque).